The following is a 319-amino-acid chain: Ribosomal RNA small subunit methyltransferase H (319 aa).

S-adenosyl-L-methionine contacts are provided by residues Gly52–His54, Asp70, Phe100, Asp126, and Gln133. The tract at residues Pro289–Met319 is disordered.

It belongs to the methyltransferase superfamily. RsmH family.

The protein resides in the cytoplasm. The catalysed reaction is cytidine(1402) in 16S rRNA + S-adenosyl-L-methionine = N(4)-methylcytidine(1402) in 16S rRNA + S-adenosyl-L-homocysteine + H(+). Its function is as follows. Specifically methylates the N4 position of cytidine in position 1402 (C1402) of 16S rRNA. The polypeptide is Ribosomal RNA small subunit methyltransferase H (Synechococcus sp. (strain JA-2-3B'a(2-13)) (Cyanobacteria bacterium Yellowstone B-Prime)).